We begin with the raw amino-acid sequence, 467 residues long: MTSQLKRTLTKRYGVLELWEIIVIALFAAFIVILVLSVWLSFRKKSKRSNATTLPVTQSPRFTEEIKEISVDHGSSNNNGTSYQTLDEKFVEDIENGDKFSGSLEKKPLVGSHLPPSTPSTTAPSPLLGLPEVSHIGWGHWFTLRDLQLATNHFSKESIIGDGGYGVVYHGTLTNKTPVAVKKLLNNPGQADKDFRVEVEAIGHVRHKNLVRLLGYCVEGTHRMLVYEYMNNGNLEQWLHGDMIHKGHLTWEARIKVLVGTAKALAYLHEAIEPKVVHRDIKSSNILMDDNFDAKLSDFGLAKLLGADSNYVSTRVMGTFGYVAPEYANSGLLNEKSDVYSYGVVLLEAITGRYPVDYARPKEEVHMVEWLKLMVQQKQFEEVVDKELEIKPTTSELKRALLTALRCVDPDADKRPKMSQVARMLESDEYPVMPREERRRRRNQNAETHRESTDTNKDNDITTDAKI.

Positions methionine 1 to valine 35 are cleaved as a signal peptide. Topologically, residues leucine 36–alanine 123 are extracellular. Residue asparagine 50 is glycosylated (N-linked (GlcNAc...) asparagine). Position 70 is a phosphoserine (serine 70). The N-linked (GlcNAc...) asparagine glycan is linked to asparagine 79. A disordered region spans residues glycine 102 to proline 126. A helical membrane pass occupies residues proline 124–leucine 144. Residues arginine 145–isoleucine 467 are Cytoplasmic-facing. The Protein kinase domain occupies phenylalanine 154–methionine 433. ATP-binding positions include isoleucine 160–valine 168 and lysine 182. At tyrosine 227 the chain carries Phosphotyrosine. The active-site Proton acceptor is aspartate 280. 2 positions are modified to phosphoserine: serine 284 and serine 313. Residues threonine 314 and threonine 319 each carry the phosphothreonine modification. Tyrosine 327 is modified (phosphotyrosine). The disordered stretch occupies residues aspartate 413–isoleucine 467. The segment covering glutamate 447–isoleucine 467 has biased composition (basic and acidic residues).

The protein belongs to the protein kinase superfamily. Ser/Thr protein kinase family.

The protein resides in the cell membrane. It catalyses the reaction L-seryl-[protein] + ATP = O-phospho-L-seryl-[protein] + ADP + H(+). The enzyme catalyses L-threonyl-[protein] + ATP = O-phospho-L-threonyl-[protein] + ADP + H(+). This chain is Probable receptor-like protein kinase At3g17420, found in Arabidopsis thaliana (Mouse-ear cress).